Consider the following 47-residue polypeptide: Conotoxin Bu10 (47 aa).

The propeptide occupies 1 to 22; sequence DSRGTQLHRALRKATILSVSAR. 3 disulfides stabilise this stretch: C23–C37, C30–C41, and C36–C46. Residue C46 is modified to Cysteine amide.

This sequence belongs to the conotoxin O1 superfamily. As to expression, expressed by the venom duct.

The protein resides in the secreted. This Conus bullatus (Bubble cone) protein is Conotoxin Bu10.